The chain runs to 489 residues: Probable 26S proteasome non-ATPase regulatory subunit 3 (489 aa).

The segment at 1-23 (MTQDVEMKEVPAPAPSNSVTAAT) is disordered. Positions 241–422 (CRYLFYLGKI…GWMVSKETGD (182 aa)) constitute a PCI domain. Residues 454–489 (PANSHKDKESAEKRRERQQQEQELAKHIAEEDDDEF) form a disordered region. The span at 457-482 (SHKDKESAEKRRERQQQEQELAKHIA) shows a compositional bias: basic and acidic residues.

The protein belongs to the proteasome subunit S3 family. As to quaternary structure, the 26S proteasome is composed of a core protease, known as the 20S proteasome, capped at one or both ends by the 19S regulatory complex (RC). The RC is composed of at least 18 different subunits in two subcomplexes, the base and the lid, which form the portions proximal and distal to the 20S proteolytic core, respectively.

The protein localises to the nucleus. In terms of biological role, acts as a regulatory subunit of the 26 proteasome which is involved in the ATP-dependent degradation of ubiquitinated proteins. The protein is Probable 26S proteasome non-ATPase regulatory subunit 3 (21D7) of Daucus carota (Wild carrot).